The chain runs to 257 residues: MRDTMEILRTENIVKYFGEFKALDGVSISVNKGDVTLIIGPNGSGKSTLINVITGFLKADEGRVYFENKDITNKEPAELYHYGIVRTFQTPQPLKEMTVLENLLIGEINPGESPLNSLFYKKWIPKEEEMVEKAFKILEFLKLSHLYDRKAGELSGGQMKLVEIGRALMTNPKMIVMDEPIAGVAPGLAHDIFNHVLELKAKGITFLIIEHRLDIVLNYIDHLYVMFNGQIIAEGRGEEEIKNVLSDPKVVEIYIGE.

One can recognise an ABC transporter domain in the interval 8–253 (LRTENIVKYF…VLSDPKVVEI (246 aa)). 40–47 (GPNGSGKS) contacts ATP.

The protein belongs to the ABC transporter superfamily. In terms of assembly, monomer.

Functionally, probable component of a branched-chain amino-acid transport system. This is Probable branched-chain amino acid transport ATP-binding protein LivG (livG) from Methanocaldococcus jannaschii (strain ATCC 43067 / DSM 2661 / JAL-1 / JCM 10045 / NBRC 100440) (Methanococcus jannaschii).